Consider the following 805-residue polypeptide: Acetyl-CoA decarbonylase/synthase complex subunit alpha 2 (805 aa).

[4Fe-4S] cluster-binding residues include Cys-72, Cys-75, Cys-76, Cys-78, Cys-83, and Cys-93. A CO-binding site is contributed by His-116. Residues His-249, Cys-277, and Cys-322 each coordinate [Ni-4Fe-4S] cluster. 4Fe-4S ferredoxin-type domains follow at residues 407 to 435 (EEFK…IPEA) and 445 to 474 (EYLE…LNVL). [4Fe-4S] cluster contacts are provided by Cys-416, Cys-419, Cys-422, Cys-426, Cys-454, Cys-457, Cys-460, and Cys-464. [Ni-4Fe-4S] cluster is bound by residues Cys-522, Cys-551, and Cys-586.

This sequence belongs to the Ni-containing carbon monoxide dehydrogenase family. In terms of assembly, heterotetramer of two alpha and two epsilon subunits. The ACDS complex is made up of alpha, epsilon, beta, gamma and delta subunits with a probable stoichiometry of (alpha(2)epsilon(2))(4)-beta(8)-(gamma(1)delta(1))(8). It depends on [4Fe-4S] cluster as a cofactor. Requires [Ni-4Fe-4S] cluster as cofactor.

The enzyme catalyses CO + 2 oxidized [2Fe-2S]-[ferredoxin] + H2O = 2 reduced [2Fe-2S]-[ferredoxin] + CO2 + 2 H(+). The protein operates within one-carbon metabolism; methanogenesis from acetate. Functionally, part of the ACDS complex that catalyzes the reversible cleavage of acetyl-CoA, allowing growth on acetate as sole source of carbon and energy. The alpha-epsilon subcomponent functions as a carbon monoxide dehydrogenase. This chain is Acetyl-CoA decarbonylase/synthase complex subunit alpha 2, found in Methanosarcina acetivorans (strain ATCC 35395 / DSM 2834 / JCM 12185 / C2A).